Here is a 554-residue protein sequence, read N- to C-terminus: Endochitinase (554 aa).

The N-terminal stretch at 1 to 19 (MRATLATLAVLALATAVQS) is a signal peptide. Residues 23–398 (ARIVCYFSNW…KILHKHMSSY (376 aa)) form the GH18 domain. Cys-27 and Cys-52 are oxidised to a cystine. 76-77 (LD) provides a ligand contact to chitin. Asn-85 is a glycosylation site (N-linked (GlcNAc...) asparagine). 103–106 (GGWA) serves as a coordination point for chitin. Glu-146 functions as the Proton donor in the catalytic mechanism. Chitin-binding positions include Tyr-147 and 213-216 (MSYD). An N-linked (GlcNAc...) asparagine glycan is attached at Asn-303. Residue Trp-370 participates in chitin binding. The disordered stretch occupies residues 398–494 (YTVPPPHTEN…VPPTENEVDG (97 aa)). Positions 431–457 (PTTTTAKPASTTKTTVKTTTTTTAKPP) are enriched in low complexity. The span at 467–477 (INVRPEPKPEP) shows a compositional bias: basic and acidic residues. Residues 495–553 (SEICNSDQDYIPDKKHCDKYWRCVNGEAMQFSCQHGTVFNVELNVCDWPSNATRRECQQ) form the Chitin-binding type-2 domain. Cys-527 and Cys-540 are disulfide-bonded. Asn-545 carries an N-linked (GlcNAc...) asparagine glycan.

The protein belongs to the glycosyl hydrolase 18 family. Chitinase class II subfamily. In terms of tissue distribution, epidermis and gut.

It is found in the secreted. It carries out the reaction Random endo-hydrolysis of N-acetyl-beta-D-glucosaminide (1-&gt;4)-beta-linkages in chitin and chitodextrins.. In terms of biological role, digests chitin in the exoskeleton during the molting process. This chain is Endochitinase, found in Manduca sexta (Tobacco hawkmoth).